The primary structure comprises 120 residues: Large ribosomal subunit protein bL21 (120 aa).

The protein belongs to the bacterial ribosomal protein bL21 family. In terms of assembly, part of the 50S ribosomal subunit. Contacts protein L20.

In terms of biological role, this protein binds to 23S rRNA in the presence of protein L20. The polypeptide is Large ribosomal subunit protein bL21 (Roseiflexus castenholzii (strain DSM 13941 / HLO8)).